Reading from the N-terminus, the 52-residue chain is Large ribosomal subunit protein eL40 (52 aa).

Zn(2+) is bound by residues cysteine 20, cysteine 23, cysteine 34, and cysteine 39.

The protein belongs to the eukaryotic ribosomal protein eL40 family. In terms of assembly, component of the large ribosomal subunit. Mature ribosomes consist of a small (40S) and a large (60S) subunit. The 40S subunit contains about 32 different proteins and 1 molecule of RNA (18S). The 60S subunit contains 45 different proteins and 3 molecules of RNA (25S, 5.8S and 5S). Zn(2+) serves as cofactor.

It is found in the cytoplasm. Functionally, component of the ribosome, a large ribonucleoprotein complex responsible for the synthesis of proteins in the cell. The small ribosomal subunit (SSU) binds messenger RNAs (mRNAs) and translates the encoded message by selecting cognate aminoacyl-transfer RNA (tRNA) molecules. The large subunit (LSU) contains the ribosomal catalytic site termed the peptidyl transferase center (PTC), which catalyzes the formation of peptide bonds, thereby polymerizing the amino acids delivered by tRNAs into a polypeptide chain. The nascent polypeptides leave the ribosome through a tunnel in the LSU and interact with protein factors that function in enzymatic processing, targeting, and the membrane insertion of nascent chains at the exit of the ribosomal tunnel. This is Large ribosomal subunit protein eL40 from Candida albicans (strain SC5314 / ATCC MYA-2876) (Yeast).